The primary structure comprises 342 residues: Ferredoxin--NADP reductase (342 aa).

8 residues coordinate FAD: Cys17, Asp36, Gln44, Tyr49, Val89, Phe124, Asp289, and Thr330.

This sequence belongs to the ferredoxin--NADP reductase type 2 family. As to quaternary structure, homodimer. FAD serves as cofactor.

The enzyme catalyses 2 reduced [2Fe-2S]-[ferredoxin] + NADP(+) + H(+) = 2 oxidized [2Fe-2S]-[ferredoxin] + NADPH. The chain is Ferredoxin--NADP reductase from Nitrobacter hamburgensis (strain DSM 10229 / NCIMB 13809 / X14).